Reading from the N-terminus, the 262-residue chain is 14-3-3 protein I (262 aa).

Belongs to the 14-3-3 family. Homodimer. Forms a complex composed of CDPK1, PKA regulatory subunit PKAr and 14-3-3I; the complex is formed in merozoites in response to low extracellular level of K(+) and may play a role in microneme secretion. Interacts with CDPK1 (when phosphorylated) in a Ca(2+)-independent manner; the interaction does not regulate CDPK1 catalytic activity but is required for merozoite invasion of host erythrocytes. Interacts with PKA regulatory subunit PKAr (when phosphorylated) in a Ca(2+)-dependent manner. Interacts with histone H3 (when phosphorylated at 'Ser-28' or when phosphorylated at 'Ser-28' and 'Ser-32').

The protein localises to the cell membrane. The protein resides in the cytoplasm. It is found in the nucleus. Adapter protein which binds to its partners, usually via a phosphoserine or phosphothreonine motif. Binding generally results in the modulation of the activity and/or cellular localization of the binding partner. Via its interaction with CDPK1 and PKAr, involved in merozoite microneme secretion and thus in merozoite invasion of host erythrocytes. The protein is 14-3-3 protein I of Plasmodium falciparum (isolate 3D7).